The primary structure comprises 89 residues: Huwentoxin-IV (89 aa).

A signal peptide spans 1–24 (MVNMKASMFLALAGLVLLFVVCYA). Positions 25-52 (SESEEKEFSNELLSSVLAVDDNSKGEER) are excised as a propeptide. Position 53 is a pyrrolidone carboxylic acid (Glu); partial (Glu53). 3 disulfide bridges follow: Cys54/Cys69, Cys61/Cys76, and Cys68/Cys83. Ile87 bears the Isoleucine amide mark.

It belongs to the neurotoxin 10 (Hwtx-1) family. 22 (Htx-4) subfamily. Post-translationally, two forms of huwentoxin-IV exist in the venom of H.schmidti, a non-N-terminally modified (HwTx-IV) and a naturally modified peptide with pyroglutamic acid residue at position 53 (mHwTx-IV). mHwTx-IV shows no observable difference with the unmodified toxin when applied to the TTX-S sodium channel of DRG neuron (IC(50)~50 nM) or when tested on hNav1.7/SCN9A (IC(50)=30.8 nM). In addition, similarly to the unmodified toxin, mHwTx-IV has only a weak affinity for lipid membranes. However, in contrast with HwTx-IV, which dissociates at moderate and high depolarization voltages (50-200 mV), mHwTx-IV inhibition of TTX-sensitive sodium channels is not reversed by strong depolarization voltages. As to expression, expressed by the venom gland.

The protein resides in the secreted. In terms of biological role, this lethal neurotoxin (without cyclization at position 53) inhibits neuronal voltage-gated sodium channel Nav1.2/SCN2A (IC(50)=10-150 nM), rNav1.3/SCN3A (IC(50)=338 nM), Nav1.6/SCN8A (IC(50)=117 nM), and hNav1.7/SCN9A (IC(50)=9.6-33 nM). It inhibits activation of sodium channel by trapping the voltage sensor of domain II (DIIS4) in the closed configuration. The toxin neither shifts the Nav1.7/SCN9A activation curve nor modifies the slope factor. It does not slow fast-inactivation of hNav1.7/SCN9A channels. In addition, it has only a weak affinity for lipid membranes. This toxin also exists with a pyroglutamate at position 53. The sole difference observed between modified (mHwTx-IV) and unmodified toxins is that moderate or high depolarization voltages (200 mV) permit the unmodified toxin to dissociate, whereas mHwTx-IV toxin does not dissociate, even at high depolarization voltages. These data indicate that mHwTx-IV strongly binds to voltage sensor of sodium channel even at extreme depolarization voltages. The polypeptide is Huwentoxin-IV (Cyriopagopus schmidti (Chinese bird spider)).